The sequence spans 112 residues: Small ribosomal subunit protein bS6c (112 aa).

This sequence belongs to the bacterial ribosomal protein bS6 family.

It is found in the plastid. Its subcellular location is the chloroplast. In terms of biological role, binds together with bS18 to 16S ribosomal RNA. The polypeptide is Small ribosomal subunit protein bS6c (rps6) (Porphyra purpurea (Red seaweed)).